We begin with the raw amino-acid sequence, 294 residues long: Small ribosomal subunit protein uS2 (294 aa).

Residues 256 to 274 are compositionally biased toward basic and acidic residues; sequence SGKFIMDEDPDSKKTKTAE. A disordered region spans residues 256–294; that stretch reads SGKFIMDEDPDSKKTKTAEEPSATIEPSTTTTVEVDQNE. Positions 280–294 are enriched in polar residues; sequence IEPSTTTTVEVDQNE.

This sequence belongs to the universal ribosomal protein uS2 family.

The chain is Small ribosomal subunit protein uS2 from Leptospira interrogans serogroup Icterohaemorrhagiae serovar Lai (strain 56601).